A 298-amino-acid polypeptide reads, in one-letter code: N-acetylmuramic acid 6-phosphate etherase (298 aa).

Residues 55-218 (IHAQVSGGGR…STGLMIKSGK (164 aa)) enclose the SIS domain. Residue glutamate 83 is the Proton donor of the active site. Glutamate 114 is a catalytic residue.

The protein belongs to the GCKR-like family. MurNAc-6-P etherase subfamily. In terms of assembly, homodimer.

The catalysed reaction is N-acetyl-D-muramate 6-phosphate + H2O = N-acetyl-D-glucosamine 6-phosphate + (R)-lactate. It participates in amino-sugar metabolism; 1,6-anhydro-N-acetylmuramate degradation. The protein operates within amino-sugar metabolism; N-acetylmuramate degradation. It functions in the pathway cell wall biogenesis; peptidoglycan recycling. Functionally, specifically catalyzes the cleavage of the D-lactyl ether substituent of MurNAc 6-phosphate, producing GlcNAc 6-phosphate and D-lactate. Together with AnmK, is also required for the utilization of anhydro-N-acetylmuramic acid (anhMurNAc) either imported from the medium or derived from its own cell wall murein, and thus plays a role in cell wall recycling. This chain is N-acetylmuramic acid 6-phosphate etherase, found in Escherichia coli O157:H7 (strain EC4115 / EHEC).